The following is a 74-amino-acid chain: Large ribosomal subunit protein bL31 (74 aa).

Cys-16, Cys-18, Cys-37, and Cys-40 together coordinate Zn(2+).

Belongs to the bacterial ribosomal protein bL31 family. Type A subfamily. Part of the 50S ribosomal subunit. It depends on Zn(2+) as a cofactor.

Binds the 23S rRNA. This is Large ribosomal subunit protein bL31 from Nitrosomonas europaea (strain ATCC 19718 / CIP 103999 / KCTC 2705 / NBRC 14298).